The chain runs to 500 residues: Protein SLENDER RICE1-LIKE 2 (500 aa).

In terms of domain architecture, GRAS spans 68–454 (KELEKMALRS…QRLYSASAWR (387 aa)). The leucine repeat I (LRI) stretch occupies residues 75–135 (LRSVNLMVTC…DALAERLFPA (61 aa)). The segment at 154–219 (FRGFYEAGPY…GGPPFLRITG (66 aa)) is VHIID. The VHIID motif lies at 185–189 (VHVID). The leucine repeat II (LRII) stretch occupies residues 233-265 (DVGLRLAEFARSCSVPFAFRGIAADQLDGLRPW). The PFYRE stretch occupies residues 275–376 (VAINSVLQLH…EAYLQGEIAD (102 aa)). The short motif at 283–287 (LHRLL) is the LXXLL motif element. The tract at residues 379-454 (SREGSSRVER…QRLYSASAWR (76 aa)) is SAW. The tract at residues 466–500 (SGAADAMEESQNSNTNGGGGGSSGGGHGALNQIMQ) is disordered. Positions 481-493 (NGGGGGSSGGGHG) are enriched in gly residues.

Belongs to the GRAS family. As to expression, expressed at low levels in leaf blades, leaf sheaths, rachis and flowers. Expressed in the embryo of immature seeds.

The protein resides in the nucleus. In terms of biological role, probable transcriptional regulator that acts as a repressor of the gibberellin (GA) signaling pathway. Its repressive activity is weaker than that of SLR1. Its overexpression prevents the GA signaling pathway and induces a dwarf phenotype in Arabidopsis thaliana plants. The polypeptide is Protein SLENDER RICE1-LIKE 2 (Oryza sativa subsp. japonica (Rice)).